The sequence spans 228 residues: 7-cyano-7-deazaguanine synthase (228 aa).

10–20 is an ATP binding site; sequence FSGGQDSTTLA. The Zn(2+) site is built by Cys190, Cys205, Cys208, and Cys211.

Belongs to the QueC family. It depends on Zn(2+) as a cofactor.

It catalyses the reaction 7-carboxy-7-deazaguanine + NH4(+) + ATP = 7-cyano-7-deazaguanine + ADP + phosphate + H2O + H(+). Its pathway is purine metabolism; 7-cyano-7-deazaguanine biosynthesis. Its function is as follows. Catalyzes the ATP-dependent conversion of 7-carboxy-7-deazaguanine (CDG) to 7-cyano-7-deazaguanine (preQ(0)). The sequence is that of 7-cyano-7-deazaguanine synthase from Helicobacter pylori (strain P12).